Here is an 813-residue protein sequence, read N- to C-terminus: Glycerol-3-phosphate acyltransferase (813 aa).

The HXXXXD motif signature appears at 304-309 (CHRSHI).

This sequence belongs to the GPAT/DAPAT family.

Its subcellular location is the cell inner membrane. It catalyses the reaction sn-glycerol 3-phosphate + an acyl-CoA = a 1-acyl-sn-glycero-3-phosphate + CoA. It participates in phospholipid metabolism; CDP-diacylglycerol biosynthesis; CDP-diacylglycerol from sn-glycerol 3-phosphate: step 1/3. This is Glycerol-3-phosphate acyltransferase from Actinobacillus succinogenes (strain ATCC 55618 / DSM 22257 / CCUG 43843 / 130Z).